The primary structure comprises 786 residues: ATP-dependent RNA helicase SUPV3L1, mitochondrial (786 aa).

The transit peptide at 1–22 (MSFSRALLWARLPAGRQAGHRA) directs the protein to the mitochondrion. K99 carries the post-translational modification N6-acetyllysine. The region spanning 194-334 (DARAMQRKII…AIDLVMELMY (141 aa)) is the Helicase ATP-binding domain. 207–214 (GPTNSGKT) is a binding site for ATP. Position 220 is an N6-acetyllysine (K220). Residues 353 to 518 (VLDHALESLD…GLHPTAEQIE (166 aa)) enclose the Helicase C-terminal domain. The interval 650-786 (PDASLIRDLQ…RRKKKEPDSD (137 aa)) is interaction with LAMTOR5, important for protein stability. 2 disordered regions span residues 690 to 730 (GFPS…DAGE) and 749 to 786 (KQLE…PDSD). Residues 693–705 (SGSQSRLSGTLKS) are compositionally biased toward polar residues. S725 is modified (phosphoserine). The span at 749-771 (KQLEKEWMTQQTEHNKEKTESGT) shows a compositional bias: basic and acidic residues.

This sequence belongs to the helicase family. Homodimer; in free form. Component of the mitochondrial degradosome (mtEXO) complex which is a heteropentamer containing 2 copies of SUPV3L1 and 3 copies of PNPT1. As part of mitochondrial degradosome complex, interacts with GRSF1 in a RNA-dependent manner; the interaction enhances the activity of the complex. Interacts with LAMTOR5/HBXIP, WRN and BLM. It depends on Mg(2+) as a cofactor. Requires Mn(2+) as cofactor. As to expression, broadly expressed.

Its subcellular location is the nucleus. It is found in the mitochondrion matrix. It localises to the mitochondrion nucleoid. The enzyme catalyses ATP + H2O = ADP + phosphate + H(+). Its activity is regulated as follows. Helicase activity toward DNA substrate is inhibited by micromolar concentrations of 5,6-dichloro-1-(beta-D-ribofuranosyl)benzotriazole (DRBT) and 4,5,6,7-tetrabromobenzotriazole (TBBT). Helicase activity toward RNA substrate is inhibited by elevated concentrations of TBBT. Inhibited by some ring-expanded nucleoside analogs. Major helicase player in mitochondrial RNA metabolism. Component of the mitochondrial degradosome (mtEXO) complex, that degrades 3' overhang double-stranded RNA with a 3'-to-5' directionality in an ATP-dependent manner. Involved in the degradation of non-coding mitochondrial transcripts (MT-ncRNA) and tRNA-like molecules. ATPase and ATP-dependent multisubstrate helicase, able to unwind double-stranded (ds) DNA and RNA, and RNA/DNA heteroduplexes in the 5'-to-3' direction. Plays a role in the RNA surveillance system in mitochondria; regulates the stability of mature mRNAs, the removal of aberrantly formed mRNAs and the rapid degradation of non coding processing intermediates. Also implicated in recombination and chromatin maintenance pathways. May protect cells from apoptosis. Associates with mitochondrial DNA. The polypeptide is ATP-dependent RNA helicase SUPV3L1, mitochondrial (SUPV3L1) (Homo sapiens (Human)).